The primary structure comprises 346 residues: Biotin synthase (346 aa).

The Radical SAM core domain occupies 38–256 (QQVQVSTLLS…IAVARIMMPT (219 aa)). [4Fe-4S] cluster contacts are provided by C53, C57, and C60. C97, C128, C188, and R260 together coordinate [2Fe-2S] cluster.

It belongs to the radical SAM superfamily. Biotin synthase family. Homodimer. The cofactor is [4Fe-4S] cluster. Requires [2Fe-2S] cluster as cofactor.

It catalyses the reaction (4R,5S)-dethiobiotin + (sulfur carrier)-SH + 2 reduced [2Fe-2S]-[ferredoxin] + 2 S-adenosyl-L-methionine = (sulfur carrier)-H + biotin + 2 5'-deoxyadenosine + 2 L-methionine + 2 oxidized [2Fe-2S]-[ferredoxin]. Its pathway is cofactor biosynthesis; biotin biosynthesis; biotin from 7,8-diaminononanoate: step 2/2. Catalyzes the conversion of dethiobiotin (DTB) to biotin by the insertion of a sulfur atom into dethiobiotin via a radical-based mechanism. In Salmonella choleraesuis (strain SC-B67), this protein is Biotin synthase.